A 429-amino-acid chain; its full sequence is UDP-N-acetylglucosamine 1-carboxyvinyltransferase (429 aa).

22 to 23 (KN) serves as a coordination point for phosphoenolpyruvate. Arg102 is a binding site for UDP-N-acetyl-alpha-D-glucosamine. Residue Cys126 is the Proton donor of the active site. At Cys126 the chain carries 2-(S-cysteinyl)pyruvic acid O-phosphothioketal. Residues 171–174 (KVSV), Asp316, and Ile338 each bind UDP-N-acetyl-alpha-D-glucosamine.

It belongs to the EPSP synthase family. MurA subfamily.

The protein resides in the cytoplasm. It carries out the reaction phosphoenolpyruvate + UDP-N-acetyl-alpha-D-glucosamine = UDP-N-acetyl-3-O-(1-carboxyvinyl)-alpha-D-glucosamine + phosphate. It functions in the pathway cell wall biogenesis; peptidoglycan biosynthesis. Cell wall formation. Adds enolpyruvyl to UDP-N-acetylglucosamine. This is UDP-N-acetylglucosamine 1-carboxyvinyltransferase from Xanthobacter autotrophicus (strain ATCC BAA-1158 / Py2).